We begin with the raw amino-acid sequence, 617 residues long: Solute carrier family 2, facilitated glucose transporter member 12 (617 aa).

The segment at 1 to 29 (MVPVENTEGPSLLNQKGTAVETEGSGSRH) is disordered. The Cytoplasmic portion of the chain corresponds to 1-44 (MVPVENTEGPSLLNQKGTAVETEGSGSRHPPWARGCGMFTFLSS). Residues 8-17 (EGPSLLNQKG) show a composition bias toward polar residues. The helical transmembrane segment at 45–65 (VTAAVSGLLVGYELGIISGAL) threads the bilayer. Residues 66-80 (LQIKTLLALSCHEQE) lie on the Extracellular side of the membrane. The helical transmembrane segment at 81–101 (MVVSSLVIGALLASLTGGVLI) threads the bilayer. The Cytoplasmic segment spans residues 102-115 (DRYGRRTAIILSSC). The helical transmembrane segment at 116–136 (LLGLGSLVLILSLSYTVLIVG) threads the bilayer. Arg-137 is a topological domain (extracellular). A helical transmembrane segment spans residues 138–158 (IAIGVSISLSSIATCVYIAEI). Residues 159 to 172 (APQHRRGLLVSLNE) are Cytoplasmic-facing. A helical transmembrane segment spans residues 173–193 (LMIVIGILSAYISNYAFANVF). The Extracellular segment spans residues 194 to 197 (HGWK). A helical transmembrane segment spans residues 198 to 218 (YMFGLVIPLGVLQAIAMYFLP). Residues 219 to 278 (PSPRFLVMKGQEGAASKVLGRLRALSDTTEELTVIKSSLKDEYQYSFWDLFRSKDNMRTR) lie on the Cytoplasmic side of the membrane. Residues 279 to 299 (IMIGLTLVFFVQITGQPNILF) traverse the membrane as a helical segment. At 300–317 (YASTVLKSVGFQSNEAAS) the chain is on the extracellular side. The chain crosses the membrane as a helical span at residues 318-338 (LASTGVGVVKVISTIPATLLV). Over 339–345 (DHVGSKT) the chain is Cytoplasmic. A helical transmembrane segment spans residues 346-366 (FLCIGSSVMAASLVTMGIVNL). Residues 367–466 (NIHMNFTHIC…PAFLKWLSLA (100 aa)) are Extracellular-facing. N-linked (GlcNAc...) asparagine glycosylation is found at Asn-371, Asn-383, Asn-396, and Asn-401. The chain crosses the membrane as a helical span at residues 467-487 (SLLVYVAAFSIGLGPMPWLVL). Over 488 to 498 (SEIFPGGIRGR) the chain is Cytoplasmic. A helical membrane pass occupies residues 499 to 519 (AMALTSSMNWGINLLISLTFL). The Extracellular segment spans residues 520-528 (TVTDLIGLP). A helical transmembrane segment spans residues 529 to 549 (WVCFIYTIMSLASLLFVVMFI). The Cytoplasmic portion of the chain corresponds to 550-617 (PETKGCSLEQ…GQSRQLSPET (68 aa)).

This sequence belongs to the major facilitator superfamily. Sugar transporter (TC 2.A.1.1) family. Glucose transporter subfamily. As to expression, predominantly expressed in skeletal muscle, heart and prostate, with lower levels in brain, placenta and kidney.

The protein localises to the cell membrane. It localises to the endomembrane system. The protein resides in the cytoplasm. It is found in the perinuclear region. The catalysed reaction is D-glucose(out) = D-glucose(in). In terms of biological role, insulin-independent facilitative glucose transporter. This is Solute carrier family 2, facilitated glucose transporter member 12 from Homo sapiens (Human).